Consider the following 291-residue polypeptide: Formamidopyrimidine-DNA glycosylase (291 aa).

Residue Pro-2 is the Schiff-base intermediate with DNA of the active site. The Proton donor role is filled by Glu-3. Lys-58 functions as the Proton donor; for beta-elimination activity in the catalytic mechanism. DNA is bound by residues His-100, Arg-123, and Lys-166. The segment at 257-291 adopts an FPG-type zinc-finger fold; it reads SVYGREGKECFQCGIPITRISQSGRSSFYCSQCQK. The Proton donor; for delta-elimination activity role is filled by Arg-281.

The protein belongs to the FPG family. Monomer. Zn(2+) serves as cofactor.

It carries out the reaction Hydrolysis of DNA containing ring-opened 7-methylguanine residues, releasing 2,6-diamino-4-hydroxy-5-(N-methyl)formamidopyrimidine.. It catalyses the reaction 2'-deoxyribonucleotide-(2'-deoxyribose 5'-phosphate)-2'-deoxyribonucleotide-DNA = a 3'-end 2'-deoxyribonucleotide-(2,3-dehydro-2,3-deoxyribose 5'-phosphate)-DNA + a 5'-end 5'-phospho-2'-deoxyribonucleoside-DNA + H(+). In terms of biological role, involved in base excision repair of DNA damaged by oxidation or by mutagenic agents. Acts as a DNA glycosylase that recognizes and removes damaged bases. Has a preference for oxidized purines, such as 7,8-dihydro-8-oxoguanine (8-oxoG). Has AP (apurinic/apyrimidinic) lyase activity and introduces nicks in the DNA strand. Cleaves the DNA backbone by beta-delta elimination to generate a single-strand break at the site of the removed base with both 3'- and 5'-phosphates. The chain is Formamidopyrimidine-DNA glycosylase from Bartonella quintana (strain Toulouse) (Rochalimaea quintana).